The following is a 425-amino-acid chain: Histidine--tRNA ligase (425 aa).

This sequence belongs to the class-II aminoacyl-tRNA synthetase family. In terms of assembly, homodimer.

Its subcellular location is the cytoplasm. The enzyme catalyses tRNA(His) + L-histidine + ATP = L-histidyl-tRNA(His) + AMP + diphosphate + H(+). The polypeptide is Histidine--tRNA ligase (Chlorobium chlorochromatii (strain CaD3)).